We begin with the raw amino-acid sequence, 415 residues long: Glucose-6-phosphate isomerase (415 aa).

Glutamate 267 (proton donor) is an active-site residue. Residues histidine 293 and lysine 406 contribute to the active site.

It belongs to the GPI family.

The protein resides in the cytoplasm. The catalysed reaction is alpha-D-glucose 6-phosphate = beta-D-fructose 6-phosphate. Its pathway is carbohydrate biosynthesis; gluconeogenesis. The protein operates within carbohydrate degradation; glycolysis; D-glyceraldehyde 3-phosphate and glycerone phosphate from D-glucose: step 2/4. Its function is as follows. Catalyzes the reversible isomerization of glucose-6-phosphate to fructose-6-phosphate. This Thermus thermophilus (strain ATCC 27634 / DSM 579 / HB8) protein is Glucose-6-phosphate isomerase.